A 350-amino-acid polypeptide reads, in one-letter code: Very-long-chain 3-oxoacyl-CoA reductase (350 aa).

Residues 28 to 48 (SLVLLAGIGALSVGTFALRLV) traverse the membrane as a helical segment. The NADP(+) site is built by Val79, Asp134, Asn161, Lys196, Tyr228, Lys232, Val261, and Ser263. Residue Tyr228 is the Proton donor of the active site. Lys232 acts as the Lowers pKa of active site Tyr in catalysis.

This sequence belongs to the short-chain dehydrogenases/reductases (SDR) family.

The protein resides in the endoplasmic reticulum membrane. The enzyme catalyses a very-long-chain (3R)-3-hydroxyacyl-CoA + NADP(+) = a very-long-chain 3-oxoacyl-CoA + NADPH + H(+). Its pathway is lipid metabolism; fatty acid biosynthesis. Functionally, component of the microsomal membrane bound fatty acid elongation system, which produces the 26-carbon very long-chain fatty acids (VLCFA) from palmitate. Catalyzes the reduction of the 3-ketoacyl-CoA intermediate that is formed in each cycle of fatty acid elongation. VLCFAs serve as precursors for ceramide and sphingolipids. The polypeptide is Very-long-chain 3-oxoacyl-CoA reductase (Mycosarcoma maydis (Corn smut fungus)).